The chain runs to 2772 residues: Replicase polyprotein 1ab (2772 aa).

Residues 143 to 157 (REQPKPAVKQDEQKP) are compositionally biased toward basic and acidic residues. The segment at 143 to 163 (REQPKPAVKQDEQKPKRQASH) is disordered. Catalysis depends on for leader protease activity residues C311 and H357. The region spanning 478–669 (QFSDSVRSSH…HSFSNVSGFF (192 aa)) is the Alphavirus-like MT domain. 2 disordered regions span residues 1277-1301 (AGPSGTQHEAVPGDDNDGSTSSVSS) and 1400-1442 (VVGE…QADI). Over residues 1430–1442 (VQSSLVSSPQADI) the composition is skewed to polar residues. Residues 1601-1694 (VFDHCLVQKY…RISLTFRATR (94 aa)) enclose the Fe2OG dioxygenase domain. Residues H1619, D1621, and H1676 each coordinate Fe cation. R1685 provides a ligand contact to 2-oxoglutarate. The interval 1708-1746 (GVSDEKSPGVPNQQPQSQGATRTITPKSGGKALSEGSGR) is disordered. The span at 1717–1733 (VPNQQPQSQGATRTITP) shows a compositional bias: polar residues. The 165-residue stretch at 1902 to 2066 (LVFHDAINLI…VPKKESVVYT (165 aa)) folds into the (+)RNA virus helicase ATP-binding domain. A (+)RNA virus helicase C-terminal domain is found at 2067–2233 (SKSYRCPLDV…LLTRSPRLVA (167 aa)). The RdRp catalytic domain maps to 2502–2615 (YYTYELDISK…FSRQPLDIDT (114 aa)).

It belongs to the ssRNA positive-strand viruses RNA-directed RNA polymerase family. Requires Fe(2+) as cofactor.

The catalysed reaction is RNA(n) + a ribonucleoside 5'-triphosphate = RNA(n+1) + diphosphate. The enzyme catalyses ATP + H2O = ADP + phosphate + H(+). Functionally, RNA-dependent RNA polymerase replicates the viral genome. In Grapevine leafroll-associated virus 3 (isolate United States/NY1) (GLRaV-3), this protein is Replicase polyprotein 1ab.